The primary structure comprises 394 residues: 3-hydroxybenzoate 6-hydroxylase 1 (394 aa).

It belongs to the 3-hydroxybenzoate 6-hydroxylase family. As to quaternary structure, homotrimer. It depends on FAD as a cofactor.

It carries out the reaction 3-hydroxybenzoate + NADH + O2 + H(+) = 2,5-dihydroxybenzoate + NAD(+) + H2O. Inhibited by manganese, copper, mercury, and iron ions. Its function is as follows. Catalyzes the NAD- or NADP-dependent conversion of 3-hydroxybenzoate to gentisate. The affinity of the enzyme toward NAD is twice as high as for NADP. The enzyme shows higher specific activities against the intermediates in the degradation of 2,5-xylenol and 3,5-xylenol, 3-hydroxy-4-methylbenzoate and 3-hydroxy-5-methylbenzoate, respectively, than for 3-hydroxybenzoate. It also shows activity against 3-substituted benzoates. The chain is 3-hydroxybenzoate 6-hydroxylase 1 (xlnD) from Aquipseudomonas alcaligenes (Pseudomonas alcaligenes).